The chain runs to 683 residues: Dynein, 78 kDa intermediate chain, flagellar outer arm (683 aa).

Residues 1-42 are disordered; the sequence is MPALSPAKKGTDKGKTGKKTGKQEQNAQDYIPPPPPMPGDEA. WD repeat units follow at residues 358–398, 407–450, 562–602, and 608–647; these read HTES…DEPI, KLND…LIPE, DLND…LLPL, and VKKA…RITS.

This sequence belongs to the dynein intermediate chain family. In terms of assembly, consists of at least 3 heavy chains (alpha, beta and gamma), 2 intermediate chains and 8 light chains.

Its subcellular location is the cytoplasm. It localises to the cytoskeleton. The protein localises to the flagellum axoneme. In terms of biological role, is essential for arm assembly or attachment to the outer doublet microtubule. The protein is Dynein, 78 kDa intermediate chain, flagellar outer arm (ODA9) of Chlamydomonas reinhardtii (Chlamydomonas smithii).